The following is a 205-amino-acid chain: Thymidylate kinase (205 aa).

Position 11-18 (11-18 (GLDKSGKT)) interacts with ATP.

It belongs to the thymidylate kinase family. As to quaternary structure, homodimer; the dimer arrangement is orthogonal and not antiparallel as in human enzyme.

The enzyme catalyses dTMP + ATP = dTDP + ADP. It functions in the pathway pyrimidine metabolism; dTTP biosynthesis. Functionally, poxvirus TMP kinase is able to phosphorylate dTMP, dUMP and also dGMP from any purine and pyrimidine nucleoside triphosphate. The large substrate specificity is explained by the presence of a canal connecting the edge of the dimer interface to the TMP base binding pocket, canal not found in the human homolog. In Homo sapiens (Human), this protein is Thymidylate kinase (OPG178).